We begin with the raw amino-acid sequence, 411 residues long: Putative nickel insertion protein (411 aa).

This sequence belongs to the LarC family.

In Acaryochloris marina (strain MBIC 11017), this protein is Putative nickel insertion protein.